The following is a 520-amino-acid chain: NAD(P)H-quinone oxidoreductase subunit 2 (520 aa).

The next 14 helical transmembrane spans lie at 26–46 (AVLPEAAVLMAMLGTLLVDLA), 54–74 (WSPPICYAGLGSALILLAMQW), 91–111 (LAIAFRGVIVLSTLISLLISW), 120–140 (PIGEFAAILLAATLGAMLLCG), 144–164 (LVSVFVSLETLSVASYLLSGY), 179–199 (LLVGSAAAAVFLYGASLLYGI), 220–240 (SALALVFVLSTVAFKIAAVPF), 252–272 (PTPVVAFLSVGSKAAGFALAI), 288–308 (LLFTVLAVLSMSLGNVVALAQ), 314–334 (MLAYSSIGQAGFVMIGLVCGT), 342–362 (VLYMAAYLFMNLGAFACIILF), 386–406 (LGLSLCLLSLGGIPPMLGFFG), 421–441 (LLVTVGLVTSVISIYYYISVI), and 474–494 (VALIFCVLVTAIGGIISNPLF).

This sequence belongs to the complex I subunit 2 family. In terms of assembly, NDH-1 can be composed of about 15 different subunits; different subcomplexes with different compositions have been identified which probably have different functions.

The protein localises to the cellular thylakoid membrane. The catalysed reaction is a plastoquinone + NADH + (n+1) H(+)(in) = a plastoquinol + NAD(+) + n H(+)(out). The enzyme catalyses a plastoquinone + NADPH + (n+1) H(+)(in) = a plastoquinol + NADP(+) + n H(+)(out). Its function is as follows. NDH-1 shuttles electrons from an unknown electron donor, via FMN and iron-sulfur (Fe-S) centers, to quinones in the respiratory and/or the photosynthetic chain. The immediate electron acceptor for the enzyme in this species is believed to be plastoquinone. Couples the redox reaction to proton translocation, and thus conserves the redox energy in a proton gradient. Cyanobacterial NDH-1 also plays a role in inorganic carbon-concentration. In Prochlorococcus marinus (strain NATL2A), this protein is NAD(P)H-quinone oxidoreductase subunit 2.